A 254-amino-acid chain; its full sequence is 5'/3'-nucleotidase SurE (254 aa).

Residues Asp-9, Asp-10, Ser-40, and Asn-93 each coordinate a divalent metal cation.

This sequence belongs to the SurE nucleotidase family. A divalent metal cation serves as cofactor.

It localises to the cytoplasm. It carries out the reaction a ribonucleoside 5'-phosphate + H2O = a ribonucleoside + phosphate. The catalysed reaction is a ribonucleoside 3'-phosphate + H2O = a ribonucleoside + phosphate. The enzyme catalyses [phosphate](n) + H2O = [phosphate](n-1) + phosphate + H(+). Its function is as follows. Nucleotidase with a broad substrate specificity as it can dephosphorylate various ribo- and deoxyribonucleoside 5'-monophosphates and ribonucleoside 3'-monophosphates with highest affinity to 3'-AMP. Also hydrolyzes polyphosphate (exopolyphosphatase activity) with the preference for short-chain-length substrates (P20-25). Might be involved in the regulation of dNTP and NTP pools, and in the turnover of 3'-mononucleotides produced by numerous intracellular RNases (T1, T2, and F) during the degradation of various RNAs. This is 5'/3'-nucleotidase SurE from Yersinia pseudotuberculosis serotype O:1b (strain IP 31758).